The sequence spans 316 residues: MPVNGARRSDERMFMTAIDFSDVSKTYGDKAVVSALSFRVSPGECFGLLGPNGAGKSTIARMILGMTAPDAGKITVLGVPVPAQARLARKGIGVVPQFDNLEPEFTVRENLLVYSRYFGMNTRKVEAVMSSLLEFARLESKVNARVSELSGGMKRRLTLARALINDPQLLVMDEPTTGLDPHARHLIWERLRSLLTRGKTIILTTHFMEEAERLCDRLCVLEGGRSIAEGRPHDLIDELIGCEVIEIYGGDPHELESLVGPYADRIEISGETLFCYVSDPEQVRVRLRQRAGLRILQRPPNLEDVFLRLTGREMEK.

The ABC transporter domain occupies 18 to 248 (IDFSDVSKTY…LIGCEVIEIY (231 aa)). 50-57 (GPNGAGKS) is a binding site for ATP.

This sequence belongs to the ABC transporter superfamily. Lipooligosaccharide exporter (TC 3.A.1.102) family. The complex is composed of two ATP-binding proteins (NodI) and two transmembrane proteins (NodJ).

Its subcellular location is the cell inner membrane. Its function is as follows. Part of the ABC transporter complex NodIJ involved in the export of the nodulation factors (Nod factors), the bacterial signal molecules that induce symbiosis and subsequent nodulation induction. Nod factors are LCO (lipo-chitin oligosaccharide), a modified beta-1,4-linked N-acetylglucosamine oligosaccharide. This subunit is responsible for energy coupling to the transport system. The protein is Nod factor export ATP-binding protein I of Rhizobium etli (strain ATCC 51251 / DSM 11541 / JCM 21823 / NBRC 15573 / CFN 42).